Consider the following 180-residue polypeptide: Tubulin polymerization-promoting protein homolog (180 aa).

Basic and acidic residues-rich tracts occupy residues 136-158 and 169-180; these read TGAHKERFDAEGKGKGKSGRADT and KNKDSYDKTHGK. The disordered stretch occupies residues 136 to 180; that stretch reads TGAHKERFDAEGKGKGKSGRADTTENTGYVGAYKNKDSYDKTHGK.

Belongs to the TPPP family.

Its function is as follows. Regulator of microtubule dynamics. This Caenorhabditis elegans protein is Tubulin polymerization-promoting protein homolog.